The following is a 569-amino-acid chain: Isochorismate synthase 1, chloroplastic (569 aa).

The N-terminal 45 residues, 1-45 (MASLQFSSQFLGSNTKTHSSIISISRSYSPTPFTRFSRKKYESCS), are a transit peptide targeting the chloroplast.

Belongs to the isochorismate synthase family. Monomer. Mg(2+) serves as cofactor. As to expression, leaves.

It is found in the plastid. It localises to the chloroplast. The catalysed reaction is chorismate = isochorismate. Its pathway is siderophore biosynthesis; salicylate biosynthesis. Its function is as follows. Isochorismate synthase involved in the synthesis of salicylic acid (SA) required for both local and systemic acquired resistance (LAR and SAR) while SA synthesized through the phenylalanine ammonium lyase (PAL) pathway seems to potentiate plant cell death. Also involved in phylloquinone (vitamin K1) synthesis. Has no isochorismate pyruvate lyase (IPL) activity. The protein is Isochorismate synthase 1, chloroplastic (ICS1) of Arabidopsis thaliana (Mouse-ear cress).